We begin with the raw amino-acid sequence, 513 residues long: Palmitoyltransferase ZDHHC14 (513 aa).

Over 1–59 (MHLGVEEPIRECQYNQICTHNSSPMDTPHIKKKKNKRKWQVFPGRNRFYCNGRIMMAKQ) the chain is Cytoplasmic. A helical membrane pass occupies residues 60–80 (TGVFYLTMVLILVTSGLFFAF). The Lumenal segment spans residues 81–88 (DCPFLASN). A helical transmembrane segment spans residues 89–109 (LTPAIPAIGGVLFVFVMGMLL). Topologically, residues 110 to 207 (RASFSDPGVL…GNCVGRRNYR (98 aa)) are cytoplasmic. The DHHC domain maps to 164–214 (KYCFTCKIFRPPRASHCSLCDNCVDRFDHHCPWVGNCVGRRNYRFFYLFIL). The active-site S-palmitoyl cysteine intermediate is Cys-194. The helical transmembrane segment at 208 to 228 (FFYLFILSLSFLTIFIFAFVI) threads the bilayer. Topologically, residues 229–266 (THVILNALRKALALSTAADFEAVQKDPTGLAFLVLSKT) are lumenal. A helical membrane pass occupies residues 267–287 (ALLDILEVVVCFFSVWSIVGL). The Cytoplasmic segment spans residues 288–513 (SGFHTYLISS…VRGLVKLSSV (226 aa)). Residues 348 to 369 (FIQPDTPQPATQTNGTSACPPN) are disordered. Over residues 355–369 (QPATQTNGTSACPPN) the composition is skewed to polar residues.

Belongs to the DHHC palmitoyltransferase family. ERF2/ZDHHC9 subfamily.

The protein resides in the endoplasmic reticulum membrane. It localises to the golgi apparatus membrane. The catalysed reaction is L-cysteinyl-[protein] + hexadecanoyl-CoA = S-hexadecanoyl-L-cysteinyl-[protein] + CoA. Palmitoyltransferase that could catalyze the addition of palmitate onto various protein substrates. The protein is Palmitoyltransferase ZDHHC14 (zdhhc14) of Danio rerio (Zebrafish).